Consider the following 20-residue polypeptide: Mu-conotoxin SIIIB (20 aa).

Gln1 bears the Pyrrolidone carboxylic acid mark. Disulfide bonds link Cys3–Cys13, Cys4–Cys19, and Cys8–Cys20. The residue at position 20 (Cys20) is a Cysteine amide.

Expressed by the venom duct.

The protein resides in the secreted. Functionally, mu-conotoxins block voltage-gated sodium channels (VGSC). Potently displaces (125)I-TIIIA from native rat brain Nav1.2/SCN2A (IC(50) is 5 nM) and muscle Nav1.4/SCN4A (IC(50) is 3 nM) VGSCs. Potently and irreversibly inhibits current through Xenopus oocyte-expressed Nav1.2/SCN2A and Nav1.4/SCN4A. This is Mu-conotoxin SIIIB from Conus striatus (Striated cone).